The following is a 146-amino-acid chain: Hemoglobin subunit beta (146 aa).

Valine 1 is subject to N-acetylvaline. A Globin domain is found at 2–146 (HLTADEKSAV…VATALGHKYH (145 aa)). Phosphothreonine is present on threonine 12. Serine 44 carries the phosphoserine modification. Lysine 59 carries the post-translational modification N6-acetyllysine. Histidine 63 contacts heme b. Lysine 82 is modified (N6-acetyllysine). Histidine 92 is a heme b binding site. Cysteine 93 carries the post-translational modification S-nitrosocysteine. Lysine 144 is subject to N6-acetyllysine.

The protein belongs to the globin family. In terms of assembly, heterotetramer of two alpha chains and two beta chains. Red blood cells.

In terms of biological role, involved in oxygen transport from the lung to the various peripheral tissues. The sequence is that of Hemoglobin subunit beta (HBB) from Antrozous pallidus (Pallid bat).